A 236-amino-acid polypeptide reads, in one-letter code: Small ribosomal subunit protein eS6 (236 aa).

Residues Ser-232 and Ser-233 each carry the phosphoserine modification.

It belongs to the eukaryotic ribosomal protein eS6 family. Post-translationally, phosphorylated.

The sequence is that of Small ribosomal subunit protein eS6 (RPS6) from Kluyveromyces lactis (strain ATCC 8585 / CBS 2359 / DSM 70799 / NBRC 1267 / NRRL Y-1140 / WM37) (Yeast).